The sequence spans 348 residues: Anthranilate phosphoribosyltransferase (348 aa).

5-phospho-alpha-D-ribose 1-diphosphate-binding positions include Gly-91, 94 to 95 (GD), Thr-99, 101 to 104 (NIST), 119 to 127 (KHGNRSASG), and Ser-131. Gly-91 contacts anthranilate. A Mg(2+)-binding site is contributed by Ser-103. Anthranilate is bound at residue Asn-122. Arg-177 is a binding site for anthranilate. Residues Asp-236 and Glu-237 each coordinate Mg(2+).

It belongs to the anthranilate phosphoribosyltransferase family. Homodimer. It depends on Mg(2+) as a cofactor.

The catalysed reaction is N-(5-phospho-beta-D-ribosyl)anthranilate + diphosphate = 5-phospho-alpha-D-ribose 1-diphosphate + anthranilate. Its pathway is amino-acid biosynthesis; L-tryptophan biosynthesis; L-tryptophan from chorismate: step 2/5. Catalyzes the transfer of the phosphoribosyl group of 5-phosphorylribose-1-pyrophosphate (PRPP) to anthranilate to yield N-(5'-phosphoribosyl)-anthranilate (PRA). The protein is Anthranilate phosphoribosyltransferase of Synechococcus elongatus (strain ATCC 33912 / PCC 7942 / FACHB-805) (Anacystis nidulans R2).